The following is a 216-amino-acid chain: Squamosa promoter-binding-like protein 13 (216 aa).

The interval 32 to 110 (GDGGAALPSP…PSGGGGGPRC (79 aa)) is disordered. The span at 67–91 (SSSAAVAAGASSSSSSSSVAAAARR) shows a compositional bias: low complexity. Over residues 94 to 108 (GRAGGGAPSGGGGGP) the composition is skewed to gly residues. The segment at 107 to 184 (GPRCQVERCG…AGHNERRRKS (78 aa)) adopts an SBP-type zinc-finger fold. Zn(2+) is bound by residues C110, C115, C132, H135, C151, C154, H158, and C170. A Bipartite nuclear localization signal motif is present at residues 167-183 (KRSCRRRLAGHNERRRK). Residues 175–216 (AGHNERRRKSAADTAHGENCRHADQDAGRSHQGTGNPPFQIR) are disordered. Residues 189-203 (AHGENCRHADQDAGR) show a composition bias toward basic and acidic residues. Residues 205 to 216 (HQGTGNPPFQIR) are compositionally biased toward polar residues.

In terms of tissue distribution, ubiquitous.

The protein resides in the nucleus. Its function is as follows. Trans-acting factor that binds specifically to the consensus nucleotide sequence 5'-TNCGTACAA-3'. May be involved in panicle development. This Oryza sativa subsp. japonica (Rice) protein is Squamosa promoter-binding-like protein 13 (SPL13).